The primary structure comprises 262 residues: Tryptophan synthase alpha chain (262 aa).

Catalysis depends on proton acceptor residues Glu-51 and Asp-62.

This sequence belongs to the TrpA family. As to quaternary structure, tetramer of two alpha and two beta chains.

The catalysed reaction is (1S,2R)-1-C-(indol-3-yl)glycerol 3-phosphate + L-serine = D-glyceraldehyde 3-phosphate + L-tryptophan + H2O. Its pathway is amino-acid biosynthesis; L-tryptophan biosynthesis; L-tryptophan from chorismate: step 5/5. Its function is as follows. The alpha subunit is responsible for the aldol cleavage of indoleglycerol phosphate to indole and glyceraldehyde 3-phosphate. This is Tryptophan synthase alpha chain from Oceanobacillus iheyensis (strain DSM 14371 / CIP 107618 / JCM 11309 / KCTC 3954 / HTE831).